Here is a 230-residue protein sequence, read N- to C-terminus: uncharacterized protein (230 aa).

This is an uncharacterized protein from Encephalitozoon cuniculi (strain GB-M1) (Microsporidian parasite).